The following is a 273-amino-acid chain: Pyridoxal phosphate homeostasis protein (273 aa).

Residue serine 6 is modified to Phosphoserine. Position 47 is an N6-(pyridoxal phosphate)lysine (lysine 47). Residue tyrosine 69 is modified to Phosphotyrosine. Lysine 125 carries the post-translational modification N6-succinyllysine. Phosphoserine is present on residues serine 226 and serine 244. Basic and acidic residues predominate over residues 251–260; sequence DYSKKTDKPA. The tract at residues 251 to 273 is disordered; it reads DYSKKTDKPAAELQAPEEVAQAH.

The protein belongs to the pyridoxal phosphate-binding protein YggS/PROSC family.

Functionally, pyridoxal 5'-phosphate (PLP)-binding protein, which may be involved in intracellular homeostatic regulation of pyridoxal 5'-phosphate (PLP), the active form of vitamin B6. This chain is Pyridoxal phosphate homeostasis protein, found in Bos taurus (Bovine).